The primary structure comprises 198 residues: Nucleoside triphosphate pyrophosphatase (198 aa).

D72 (proton acceptor) is an active-site residue.

It belongs to the Maf family. Requires a divalent metal cation as cofactor.

It is found in the cytoplasm. The enzyme catalyses a ribonucleoside 5'-triphosphate + H2O = a ribonucleoside 5'-phosphate + diphosphate + H(+). It carries out the reaction a 2'-deoxyribonucleoside 5'-triphosphate + H2O = a 2'-deoxyribonucleoside 5'-phosphate + diphosphate + H(+). Functionally, nucleoside triphosphate pyrophosphatase. May have a dual role in cell division arrest and in preventing the incorporation of modified nucleotides into cellular nucleic acids. In Corynebacterium diphtheriae (strain ATCC 700971 / NCTC 13129 / Biotype gravis), this protein is Nucleoside triphosphate pyrophosphatase.